The sequence spans 148 residues: Lipid droplet organization protein LDO16 (148 aa).

The Cytoplasmic segment spans residues 1–7; the sequence is MVSTATF. Residues 8 to 28 form a helical membrane-spanning segment; it reads FFFVYLTLFVVIGFFSSLFII. Residue Pro-29 is a topological domain, lumenal. Residues 30–50 traverse the membrane as a helical segment; it reads LLGISFVFAIGVVSFGFCSNM. Topologically, residues 51 to 148 are cytoplasmic; sequence SFKMAQLIYV…NKAGNKFQLS (98 aa). Residues 83–110 are disordered; that stretch reads QEPQEPLSTLRPVSNPTIPSPLRQTARP. Positions 93-109 are enriched in polar residues; sequence RPVSNPTIPSPLRQTAR. Ser-102 is modified (phosphoserine).

It belongs to the OSW5 family. As to quaternary structure, interacts specifically with the seipin complex FLD1-LDB16. Only a fraction appears to associate with the seipin core components, suggesting that it may be an ancillary subunit of the complex. Found to interact with many mitochondrial and peroxisomal proteins.

It localises to the endoplasmic reticulum membrane. Its subcellular location is the lipid droplet. Its function is as follows. Involved in lipid droplet (LD) organization. Functions primarily upon nutrient depletion, facilitating LD consumption by lipophagy. Required for correct LD distribution during entry into stationary phase, where LDs accumulate at nucleus-vacuole junction (NVJ) contact sites. Involved in membrane interaction in a manner similar to those of SNARE proteins, binding to partners present in mitochondria or peroxisomes. Its partner on the mitochondrion side might be TOM22, a mitochondrial outer membrane protein, linking lipid droplets and mitochondria by protein-protein interaction. Involved in spore wall assembly. This chain is Lipid droplet organization protein LDO16, found in Saccharomyces cerevisiae (strain ATCC 204508 / S288c) (Baker's yeast).